Reading from the N-terminus, the 364-residue chain is Mannose-1-phosphate guanyltransferase (364 aa).

It belongs to the transferase hexapeptide repeat family.

It is found in the cytoplasm. It catalyses the reaction alpha-D-mannose 1-phosphate + GTP + H(+) = GDP-alpha-D-mannose + diphosphate. The protein operates within nucleotide-sugar biosynthesis; GDP-alpha-D-mannose biosynthesis; GDP-alpha-D-mannose from alpha-D-mannose 1-phosphate (GTP route): step 1/1. Involved in cell wall synthesis where it is required for glycosylation. Involved in cell cycle progression through cell-size checkpoint. The chain is Mannose-1-phosphate guanyltransferase (MPG1) from Cryptococcus neoformans var. neoformans serotype D (strain B-3501A) (Filobasidiella neoformans).